A 143-amino-acid chain; its full sequence is Endoribonuclease YbeY (143 aa).

The Zn(2+) site is built by His113, His117, and Asp123.

It belongs to the endoribonuclease YbeY family. Zn(2+) is required as a cofactor.

The protein resides in the cytoplasm. Single strand-specific metallo-endoribonuclease involved in late-stage 70S ribosome quality control and in maturation of the 3' terminus of the 16S rRNA. In Elusimicrobium minutum (strain Pei191), this protein is Endoribonuclease YbeY.